We begin with the raw amino-acid sequence, 337 residues long: MSQPPAAHVPVLYTQVLDGLQVTENGTYLDGTFGRGGHARGVLEHLGPGGRLLVMDKDPEAIAVAEHSFGGDARVSIHRGSFAGLGQVVAAATVDGILLDLGVSSPQLDVAGRGFSFGKDGPLDMRMDPDNGQSAAQWLAQASEREIADVLWTYGEERQSRRIARAIVARRAEQPLLRTAQLADLIASVMPRGDSKTHPATRSFQAIRIHINRELADLEAGLDAALDALKPGGRLAVISFHSLEDRIVKQFMARYAKAPPSNRRLPEAQPFVPTLQLVSGAIKADDAELNVNPRARSAVLRVAEKLGVGIRNSGLEERSKRIPNPQSPIPASQGDAQ.

Residues 36–38 (GGH), D56, F82, D100, and Q107 contribute to the S-adenosyl-L-methionine site. The disordered stretch occupies residues 315 to 337 (LEERSKRIPNPQSPIPASQGDAQ).

Belongs to the methyltransferase superfamily. RsmH family.

It is found in the cytoplasm. The enzyme catalyses cytidine(1402) in 16S rRNA + S-adenosyl-L-methionine = N(4)-methylcytidine(1402) in 16S rRNA + S-adenosyl-L-homocysteine + H(+). Its function is as follows. Specifically methylates the N4 position of cytidine in position 1402 (C1402) of 16S rRNA. This Xanthomonas euvesicatoria pv. vesicatoria (strain 85-10) (Xanthomonas campestris pv. vesicatoria) protein is Ribosomal RNA small subunit methyltransferase H.